A 442-amino-acid polypeptide reads, in one-letter code: Asparagine--tRNA ligase (442 aa).

This sequence belongs to the class-II aminoacyl-tRNA synthetase family. As to quaternary structure, homodimer.

Its subcellular location is the cytoplasm. The enzyme catalyses tRNA(Asn) + L-asparagine + ATP = L-asparaginyl-tRNA(Asn) + AMP + diphosphate + H(+). This chain is Asparagine--tRNA ligase, found in Koribacter versatilis (strain Ellin345).